Reading from the N-terminus, the 334-residue chain is Protein-methionine-sulfoxide reductase catalytic subunit MsrP (334 aa).

The segment at residues 1-44 is a signal peptide (tat-type signal); it reads MKKNQFLKESDVTAESVFFMKRRQVLKALGISAAAFSLPHAAHA. Mo-molybdopterin-binding positions include asparagine 88, 91–92, cysteine 146, threonine 181, asparagine 233, arginine 238, and 249–251; these read YE and GIK.

It belongs to the MsrP family. As to quaternary structure, heterodimer of a catalytic subunit (MsrP) and a heme-binding subunit (MsrQ). Mo-molybdopterin is required as a cofactor. Post-translationally, predicted to be exported by the Tat system. The position of the signal peptide cleavage has not been experimentally proven.

Its subcellular location is the periplasm. It carries out the reaction L-methionyl-[protein] + a quinone + H2O = L-methionyl-(S)-S-oxide-[protein] + a quinol. The enzyme catalyses L-methionyl-[protein] + a quinone + H2O = L-methionyl-(R)-S-oxide-[protein] + a quinol. Functionally, part of the MsrPQ system that repairs oxidized periplasmic proteins containing methionine sulfoxide residues (Met-O), using respiratory chain electrons. Thus protects these proteins from oxidative-stress damage caused by reactive species of oxygen and chlorine generated by the host defense mechanisms. MsrPQ is essential for the maintenance of envelope integrity under bleach stress, rescuing a wide series of structurally unrelated periplasmic proteins from methionine oxidation, including the primary periplasmic chaperone SurA and the lipoprotein Pal. The catalytic subunit MsrP is non-stereospecific, being able to reduce both (R-) and (S-) diastereoisomers of methionine sulfoxide. The protein is Protein-methionine-sulfoxide reductase catalytic subunit MsrP of Escherichia coli O6:H1 (strain CFT073 / ATCC 700928 / UPEC).